The chain runs to 61 residues: Large ribosomal subunit protein bL32 (61 aa).

Positions Met1–Arg16 are enriched in basic residues. Residues Met1 to Leu44 form a disordered region. Residues Val28–Leu44 are compositionally biased toward basic and acidic residues.

The protein belongs to the bacterial ribosomal protein bL32 family.

This chain is Large ribosomal subunit protein bL32, found in Methylobacterium nodulans (strain LMG 21967 / CNCM I-2342 / ORS 2060).